A 611-amino-acid polypeptide reads, in one-letter code: MAGPDRKPVSSAAATTPAPSAPVVLPKTSESSQLLKIRHSMSHVMAMAVQQLFPKARVTIGPWTESGFYYDFDNPDPFTEADLKAIKKGMIKIINKKVPLERVEVTRAEAETKIKAQNEPYKLEILEGLQDPITLYTLGEDWWDLCAGPHVEHTGQLNAKAFELESVAGAYWRGDETKAQLHRIYGTAWETPEQLAEHKRRKEEALRRDHRRIGKDLDLFSIEDEAGAGLVFWHPRGARMRLLIEEFWRQAHFEGGYELLYTPHVADISLWKTSGHLDFYAESMFGPMEVDEREYQLKPMNCPFHVLTYASKLRSYRELPIRWAELGTVYRYERPGVMHGLMRVRGFTQDDAHVFCLPEQISDEILKILDLTERILSTFDFNTYEINLSTRPEKSIGDDAVWDLATKGLIEALERKGWKYKIDEGGGAFYGPKIDLKIEDAIGRMWQCSTIQLDFNLPERFKLDYVAADGSKQRPIMIHRAIFGSLERFFGIMTENYAGDYPFWLAPEQVRLLPVTDEVQPYAESLLDQLTQAGVRATIDRSGDRLGKLIRTGEQMKIPVLAVIGAKEAEQNAVSLRSRRDGDLGVAAVADLLRAAESANSQRAAGLGLNG.

The tract at residues 1-25 (MAGPDRKPVSSAAATTPAPSAPVVL) is disordered. Residues 9-24 (VSSAAATTPAPSAPVV) are compositionally biased toward low complexity. The tract at residues 209–502 (DHRRIGKDLD…MTENYAGDYP (294 aa)) is catalytic. Zn(2+) contacts are provided by Cys-302, His-353, and His-479.

Belongs to the class-II aminoacyl-tRNA synthetase family. Homodimer. Zn(2+) serves as cofactor.

The protein localises to the cytoplasm. It catalyses the reaction tRNA(Thr) + L-threonine + ATP = L-threonyl-tRNA(Thr) + AMP + diphosphate + H(+). Catalyzes the attachment of threonine to tRNA(Thr) in a two-step reaction: L-threonine is first activated by ATP to form Thr-AMP and then transferred to the acceptor end of tRNA(Thr). Also edits incorrectly charged L-seryl-tRNA(Thr). This is Threonine--tRNA ligase from Parasynechococcus marenigrum (strain WH8102).